We begin with the raw amino-acid sequence, 129 residues long: Small ribosomal subunit protein uS11 (129 aa).

This sequence belongs to the universal ribosomal protein uS11 family. In terms of assembly, part of the 30S ribosomal subunit. Interacts with proteins S7 and S18. Binds to IF-3.

Its function is as follows. Located on the platform of the 30S subunit, it bridges several disparate RNA helices of the 16S rRNA. Forms part of the Shine-Dalgarno cleft in the 70S ribosome. The polypeptide is Small ribosomal subunit protein uS11 (Desulforamulus reducens (strain ATCC BAA-1160 / DSM 100696 / MI-1) (Desulfotomaculum reducens)).